Consider the following 340-residue polypeptide: Anthranilate phosphoribosyltransferase (340 aa).

5-phospho-alpha-D-ribose 1-diphosphate contacts are provided by residues G81, 84-85 (GD), T89, 91-94 (NIST), 109-117 (KHGNRNLSS), and A121. An anthranilate-binding site is contributed by G81. S93 contacts Mg(2+). N112 is a binding site for anthranilate. R167 contributes to the anthranilate binding site. Mg(2+) is bound by residues D226 and E227.

Belongs to the anthranilate phosphoribosyltransferase family. As to quaternary structure, homodimer. It depends on Mg(2+) as a cofactor.

It catalyses the reaction N-(5-phospho-beta-D-ribosyl)anthranilate + diphosphate = 5-phospho-alpha-D-ribose 1-diphosphate + anthranilate. It functions in the pathway amino-acid biosynthesis; L-tryptophan biosynthesis; L-tryptophan from chorismate: step 2/5. Functionally, catalyzes the transfer of the phosphoribosyl group of 5-phosphorylribose-1-pyrophosphate (PRPP) to anthranilate to yield N-(5'-phosphoribosyl)-anthranilate (PRA). The chain is Anthranilate phosphoribosyltransferase from Ruegeria sp. (strain TM1040) (Silicibacter sp.).